Here is a 286-residue protein sequence, read N- to C-terminus: Bifunctional protein FolD (286 aa).

Residues 165–167 and Ser-190 contribute to the NADP(+) site; that span reads GRS.

The protein belongs to the tetrahydrofolate dehydrogenase/cyclohydrolase family. In terms of assembly, homodimer.

It carries out the reaction (6R)-5,10-methylene-5,6,7,8-tetrahydrofolate + NADP(+) = (6R)-5,10-methenyltetrahydrofolate + NADPH. It catalyses the reaction (6R)-5,10-methenyltetrahydrofolate + H2O = (6R)-10-formyltetrahydrofolate + H(+). It functions in the pathway one-carbon metabolism; tetrahydrofolate interconversion. Its function is as follows. Catalyzes the oxidation of 5,10-methylenetetrahydrofolate to 5,10-methenyltetrahydrofolate and then the hydrolysis of 5,10-methenyltetrahydrofolate to 10-formyltetrahydrofolate. The polypeptide is Bifunctional protein FolD (Staphylococcus aureus (strain bovine RF122 / ET3-1)).